Consider the following 548-residue polypeptide: Rhodopsin kinase GRK7 (548 aa).

Serine 34 carries the phosphoserine; by PKA modification. The 118-residue stretch at 54–171 folds into the RGS domain; sequence FHSLCEQQPI…LASPFYDRFL (118 aa). In terms of domain architecture, Protein kinase spans 186-449; the sequence is FTEFRVLGKG…ADDPRKHPFF (264 aa). ATP contacts are provided by residues 192-200 and lysine 215; that span reads LGKGGFGEV. The active-site Proton acceptor is aspartate 311. Residues 450–515 form the AGC-kinase C-terminal domain; the sequence is QTVNFPRLEA…GAVPVAWQEE (66 aa). The segment at 523 to 548 is disordered; it reads EELNDPNRPSGDGKGDSSKSGVCLLL. A Cysteine methyl ester modification is found at cysteine 545. The S-geranylgeranyl cysteine moiety is linked to residue cysteine 545. The propeptide at 546 to 548 is removed in mature form; that stretch reads LLL.

This sequence belongs to the protein kinase superfamily. AGC Ser/Thr protein kinase family. GPRK subfamily. Interacts (when prenylated) with PDE6D; this promotes release from membranes. Post-translationally, autophosphorylated. Phosphorylation at Ser-34 is regulated by light and activated by cAMP. Retina. Cones and rod.

It is found in the membrane. The enzyme catalyses L-threonyl-[rhodopsin] + ATP = O-phospho-L-threonyl-[rhodopsin] + ADP + H(+). The catalysed reaction is L-seryl-[rhodopsin] + ATP = O-phospho-L-seryl-[rhodopsin] + ADP + H(+). Inhibited by phosphorylation of Ser-34. Retina-specific kinase involved in the shutoff of the photoresponse and adaptation to changing light conditions via cone opsin phosphorylation, including rhodopsin (RHO). The protein is Rhodopsin kinase GRK7 (GRK7) of Ictidomys tridecemlineatus (Thirteen-lined ground squirrel).